The sequence spans 254 residues: 5-oxoprolinase subunit A (254 aa).

This sequence belongs to the LamB/PxpA family. As to quaternary structure, forms a complex composed of PxpA, PxpB and PxpC.

The enzyme catalyses 5-oxo-L-proline + ATP + 2 H2O = L-glutamate + ADP + phosphate + H(+). Catalyzes the cleavage of 5-oxoproline to form L-glutamate coupled to the hydrolysis of ATP to ADP and inorganic phosphate. In Acinetobacter baumannii (strain AB307-0294), this protein is 5-oxoprolinase subunit A.